A 425-amino-acid chain; its full sequence is Enolase (425 aa).

Q164 contributes to the (2R)-2-phosphoglycerate binding site. E208 functions as the Proton donor in the catalytic mechanism. Mg(2+) contacts are provided by D243, E286, and D312. 4 residues coordinate (2R)-2-phosphoglycerate: K337, R366, S367, and K388. Catalysis depends on K337, which acts as the Proton acceptor.

This sequence belongs to the enolase family. Mg(2+) is required as a cofactor.

It is found in the cytoplasm. The protein localises to the secreted. The protein resides in the cell surface. The catalysed reaction is (2R)-2-phosphoglycerate = phosphoenolpyruvate + H2O. The protein operates within carbohydrate degradation; glycolysis; pyruvate from D-glyceraldehyde 3-phosphate: step 4/5. Its function is as follows. Catalyzes the reversible conversion of 2-phosphoglycerate (2-PG) into phosphoenolpyruvate (PEP). It is essential for the degradation of carbohydrates via glycolysis. The polypeptide is Enolase (Methanococcus aeolicus (strain ATCC BAA-1280 / DSM 17508 / OCM 812 / Nankai-3)).